The sequence spans 150 residues: D-aminoacyl-tRNA deacylase (150 aa).

The Gly-cisPro motif, important for rejection of L-amino acids signature appears at 138-139; the sequence is GP.

The protein belongs to the DTD family. As to quaternary structure, homodimer.

Its subcellular location is the cytoplasm. It catalyses the reaction glycyl-tRNA(Ala) + H2O = tRNA(Ala) + glycine + H(+). The enzyme catalyses a D-aminoacyl-tRNA + H2O = a tRNA + a D-alpha-amino acid + H(+). Functionally, an aminoacyl-tRNA editing enzyme that deacylates mischarged D-aminoacyl-tRNAs. Also deacylates mischarged glycyl-tRNA(Ala), protecting cells against glycine mischarging by AlaRS. Acts via tRNA-based rather than protein-based catalysis; rejects L-amino acids rather than detecting D-amino acids in the active site. By recycling D-aminoacyl-tRNA to D-amino acids and free tRNA molecules, this enzyme counteracts the toxicity associated with the formation of D-aminoacyl-tRNA entities in vivo and helps enforce protein L-homochirality. The protein is D-aminoacyl-tRNA deacylase of Bacteroides fragilis (strain ATCC 25285 / DSM 2151 / CCUG 4856 / JCM 11019 / LMG 10263 / NCTC 9343 / Onslow / VPI 2553 / EN-2).